The chain runs to 546 residues: CTP synthase (546 aa).

Positions 1–266 are amidoligase domain; it reads MTTNYIFVTG…DDLVCQRFGI (266 aa). Position 14 (S14) interacts with CTP. UTP is bound at residue S14. Residues 15-20 and D72 contribute to the ATP site; that span reads SLGKGI. Residues D72 and E140 each contribute to the Mg(2+) site. CTP-binding positions include 147–149, 187–192, and K223; these read DIE and KTKPTQ. UTP-binding positions include 187 to 192 and K223; that span reads KTKPTQ. 239-241 provides a ligand contact to ATP; sequence KDV. Residues 291–542 enclose the Glutamine amidotransferase type-1 domain; that stretch reads VIGMVGKYIE…VKAAGESVRG (252 aa). An L-glutamine-binding site is contributed by G352. Residue C379 is the Nucleophile; for glutamine hydrolysis of the active site. L-glutamine-binding positions include 380-383, E403, and R470; that span reads LGMQ. Active-site residues include H515 and E517.

Belongs to the CTP synthase family. In terms of assembly, homotetramer.

It carries out the reaction UTP + L-glutamine + ATP + H2O = CTP + L-glutamate + ADP + phosphate + 2 H(+). The enzyme catalyses L-glutamine + H2O = L-glutamate + NH4(+). It catalyses the reaction UTP + NH4(+) + ATP = CTP + ADP + phosphate + 2 H(+). It functions in the pathway pyrimidine metabolism; CTP biosynthesis via de novo pathway; CTP from UDP: step 2/2. Its activity is regulated as follows. Allosterically activated by GTP, when glutamine is the substrate; GTP has no effect on the reaction when ammonia is the substrate. The allosteric effector GTP functions by stabilizing the protein conformation that binds the tetrahedral intermediate(s) formed during glutamine hydrolysis. Inhibited by the product CTP, via allosteric rather than competitive inhibition. Functionally, catalyzes the ATP-dependent amination of UTP to CTP with either L-glutamine or ammonia as the source of nitrogen. Regulates intracellular CTP levels through interactions with the four ribonucleotide triphosphates. The sequence is that of CTP synthase from Aliivibrio fischeri (strain MJ11) (Vibrio fischeri).